The primary structure comprises 414 residues: Nucleoporin NUP42 (414 aa).

The C3H1-type zinc-finger motif lies at methionine 1–glycine 25. Disordered regions lie at residues threonine 24–alanine 73 and proline 200–phenylalanine 221. FG repeat units lie at residues phenylalanine 43–glycine 44, phenylalanine 207–glycine 208, phenylalanine 214–glycine 215, phenylalanine 221–glycine 222, phenylalanine 233–glycine 234, phenylalanine 238–glycine 239, phenylalanine 257–glycine 258, phenylalanine 268–glycine 269, phenylalanine 280–glycine 281, phenylalanine 306–glycine 307, phenylalanine 325–glycine 326, phenylalanine 329–glycine 330, phenylalanine 335–glycine 336, phenylalanine 341–glycine 342, phenylalanine 347–glycine 348, phenylalanine 351–glycine 352, and phenylalanine 362–glycine 363.

Probable component of the nuclear pore complex (NPC).

It localises to the nucleus. Its subcellular location is the nuclear pore complex. It is found in the nucleus membrane. Required for the export of mRNAs containing poly(A) tails from the nucleus into the cytoplasm. The chain is Nucleoporin NUP42 (nup42) from Danio rerio (Zebrafish).